The following is a 1092-amino-acid chain: Elongation factor 3 (1092 aa).

Residue V92 participates in ADP binding. 7 HEAT repeats span residues 95 to 133 (MVKT…SPVS), 138 to 175 (PYMI…RLTP), 177 to 214 (ATKQ…TAPR), 218 to 255 (TAVP…LINN), 257 to 293 (DIEK…EVLP), 294 to 331 (PTLA…LVEK), and 333 to 370 (QIIA…KILT). E454 serves as a coordination point for ADP. ABC transporter domains follow at residues 486–704 (EELC…YYEL) and 730–1044 (LKVQ…DKNK). Residues N766, E973, N976, and H1002 each coordinate ADP. Disordered stretches follow at residues 1023–1044 (TPTG…DKNK) and 1063–1092 (SKLS…DDDE). The segment covering 1063–1075 (SKLSGKDLRKKRK) has biased composition (basic residues). The span at 1076 to 1086 (EREARRKRGEE) shows a compositional bias: basic and acidic residues.

It belongs to the ABC transporter superfamily. ABCF family. EF3 subfamily.

The protein resides in the cytoplasm. It localises to the cytosol. The catalysed reaction is ATP + H2O = ADP + phosphate + H(+). It participates in protein biosynthesis; polypeptide chain elongation. Its function is as follows. Ribosome-dependent ATPase that functions in cytoplasmic translation elongation. Required for the ATP-dependent release of deacylated tRNA from the ribosomal E-site during protein biosynthesis. Stimulates the eEF1A-dependent binding of aminoacyl-tRNA to the ribosomal A-site, which has reduced affinity for tRNA as long as the E-site is occupied. Assists translation termination by stimulating the release of nascent protein from the ribosome by release factors. This is Elongation factor 3 from Gonapodya prolifera (strain JEL478) (Monoblepharis prolifera).